We begin with the raw amino-acid sequence, 335 residues long: Auxin-responsive protein IAA6 (335 aa).

The EAR-like (transcriptional repression) motif lies at 51–55; sequence LKLGL. 3 disordered regions span residues 81-102, 143-180, and 188-207; these read LSFF…GAKR, KKGC…VGWP, and NLAS…DNAN. Residues 217–321 form the PB1 domain; that stretch reads NPLVKINMDG…TAKRLRVLRS (105 aa).

The protein belongs to the Aux/IAA family. As to quaternary structure, homodimers and heterodimers. Highly expressed in roots. Expressed in shoots and flowers.

Its subcellular location is the nucleus. Its function is as follows. Aux/IAA proteins are short-lived transcriptional factors that function as repressors of early auxin response genes at low auxin concentrations. The polypeptide is Auxin-responsive protein IAA6 (IAA6) (Oryza sativa subsp. japonica (Rice)).